A 285-amino-acid polypeptide reads, in one-letter code: Ribose-phosphate pyrophosphokinase (285 aa).

ATP-binding positions include 34-36 (DGE) and 91-92 (RQ). Mg(2+)-binding residues include H124 and D162. Residue K185 is part of the active site. D-ribose 5-phosphate is bound by residues R187, D211, and 215-219 (STGGT).

It belongs to the ribose-phosphate pyrophosphokinase family. Class III (archaeal) subfamily. Mg(2+) serves as cofactor.

The protein resides in the cytoplasm. It catalyses the reaction D-ribose 5-phosphate + ATP = 5-phospho-alpha-D-ribose 1-diphosphate + AMP + H(+). Its pathway is metabolic intermediate biosynthesis; 5-phospho-alpha-D-ribose 1-diphosphate biosynthesis; 5-phospho-alpha-D-ribose 1-diphosphate from D-ribose 5-phosphate (route I): step 1/1. Its function is as follows. Involved in the biosynthesis of the central metabolite phospho-alpha-D-ribosyl-1-pyrophosphate (PRPP) via the transfer of pyrophosphoryl group from ATP to 1-hydroxyl of ribose-5-phosphate (Rib-5-P). The polypeptide is Ribose-phosphate pyrophosphokinase (Pyrococcus abyssi (strain GE5 / Orsay)).